We begin with the raw amino-acid sequence, 417 residues long: MPAFKSDFLRTMSERGFIHQISDETGLDQLFAKETVTAYVGYDATATSLHIGNLISATMLYWLQETGHRPIALMGGGTSMIGDPSFRDDQRSLLTPEAIATNIEGIKRIFGRILRFGDGPNDAIMVNNADWLMKLNYVEFLRDVGRHFSVNRMLTFDSVKLRLDREQSLSFLEFNYMILQGYDFVELARRQNCRLQMGGSDQWGNIINGVDLGHRMGTPQLYALTTPLLTTSSGAKMGKSAKGAVWLNGDLFSPYDFWQYWRNTEDADVERFLKIFTRLPLPEIARLAALGGSEINEAKKILATETTAIVHGREAANQAEETARKTFEEGALADTLPTVGADKAALEAGIGILSLLVTAGLASSNGEARRHIQGGAVRINDQSVSDDRRMVTLQDLSPENVVKLSLGKKKHVLVRPA.

Residue Tyr-39 coordinates L-tyrosine. The 'HIGH' region motif lies at 44–53 (ATATSLHIGN). Tyr-176 and Gln-180 together coordinate L-tyrosine. Positions 236–240 (KMGKS) match the 'KMSKS' region motif. Residue Lys-239 coordinates ATP. The S4 RNA-binding domain occupies 350-416 (IGILSLLVTA…GKKKHVLVRP (67 aa)).

It belongs to the class-I aminoacyl-tRNA synthetase family. TyrS type 1 subfamily. Homodimer.

Its subcellular location is the cytoplasm. It carries out the reaction tRNA(Tyr) + L-tyrosine + ATP = L-tyrosyl-tRNA(Tyr) + AMP + diphosphate + H(+). Catalyzes the attachment of tyrosine to tRNA(Tyr) in a two-step reaction: tyrosine is first activated by ATP to form Tyr-AMP and then transferred to the acceptor end of tRNA(Tyr). This chain is Tyrosine--tRNA ligase, found in Mesorhizobium japonicum (strain LMG 29417 / CECT 9101 / MAFF 303099) (Mesorhizobium loti (strain MAFF 303099)).